We begin with the raw amino-acid sequence, 447 residues long: Probable glycosyltransferase 7 (447 aa).

Positions 1-31 are disordered; sequence MRATTGARHLHPPWRRGLRHHRQSTMPPRAS. The Cytoplasmic portion of the chain corresponds to 1-37; it reads MRATTGARHLHPPWRRGLRHHRQSTMPPRASRGRLAD. Residues 8–23 show a composition bias toward basic residues; it reads RHLHPPWRRGLRHHRQ. A helical; Signal-anchor for type II membrane protein transmembrane segment spans residues 38-60; that stretch reads AALFTAGAVLGSVLLLTLASPFS. Over 61 to 447 the chain is Lumenal; that stretch reads SSSSPSSGVG…LPFDHPTQTA (387 aa). Residues Asn-285 and Asn-329 are each glycosylated (N-linked (GlcNAc...) asparagine).

It belongs to the glycosyltransferase 34 family.

Its subcellular location is the golgi apparatus membrane. Probable glycosyltransferase that may be involved in the biosynthesis of xyloglucan. This is Probable glycosyltransferase 7 from Oryza sativa subsp. indica (Rice).